A 117-amino-acid chain; its full sequence is UPF0251 protein cbdbA217 (117 aa).

Belongs to the UPF0251 family.

The polypeptide is UPF0251 protein cbdbA217 (Dehalococcoides mccartyi (strain CBDB1)).